A 91-amino-acid polypeptide reads, in one-letter code: CRISPR-associated endoribonuclease Cas2 2 (91 aa).

Aspartate 8 provides a ligand contact to Mg(2+).

This sequence belongs to the CRISPR-associated endoribonuclease Cas2 protein family. As to quaternary structure, homodimer, forms a heterotetramer with a Cas1 homodimer. Mg(2+) is required as a cofactor.

Functionally, CRISPR (clustered regularly interspaced short palindromic repeat), is an adaptive immune system that provides protection against mobile genetic elements (viruses, transposable elements and conjugative plasmids). CRISPR clusters contain sequences complementary to antecedent mobile elements and target invading nucleic acids. CRISPR clusters are transcribed and processed into CRISPR RNA (crRNA). Functions as a ssRNA-specific endoribonuclease. Involved in the integration of spacer DNA into the CRISPR cassette. The chain is CRISPR-associated endoribonuclease Cas2 2 from Pyrobaculum aerophilum (strain ATCC 51768 / DSM 7523 / JCM 9630 / CIP 104966 / NBRC 100827 / IM2).